The primary structure comprises 736 residues: Elongation factor 2 (736 aa).

Positions 18–261 (EQVRNIGITA…MVVKFIPNPR (244 aa)) constitute a tr-type G domain. GTP is bound by residues 27–34 (AHVDHGKT), 93–97 (DTPGH), and 147–150 (NKVD). Position 602 is a diphthamide (H602).

It belongs to the TRAFAC class translation factor GTPase superfamily. Classic translation factor GTPase family. EF-G/EF-2 subfamily.

Its subcellular location is the cytoplasm. Functionally, catalyzes the GTP-dependent ribosomal translocation step during translation elongation. During this step, the ribosome changes from the pre-translocational (PRE) to the post-translocational (POST) state as the newly formed A-site-bound peptidyl-tRNA and P-site-bound deacylated tRNA move to the P and E sites, respectively. Catalyzes the coordinated movement of the two tRNA molecules, the mRNA and conformational changes in the ribosome. This is Elongation factor 2 from Staphylothermus marinus (strain ATCC 43588 / DSM 3639 / JCM 9404 / F1).